A 459-amino-acid polypeptide reads, in one-letter code: uncharacterized protein (459 aa).

2 helical membrane-spanning segments follow: residues 53–75 (IPLL…GLTL) and 111–133 (ARIA…CLCA). The disordered stretch occupies residues 174-196 (HLDNPSAPHPSENPQSRAHPKQN).

The protein resides in the cell membrane. This is an uncharacterized protein from Treponema pallidum (strain Nichols).